We begin with the raw amino-acid sequence, 246 residues long: Small ribosomal subunit protein uS2 (246 aa).

The protein belongs to the universal ribosomal protein uS2 family.

The chain is Small ribosomal subunit protein uS2 from Burkholderia cenocepacia (strain HI2424).